We begin with the raw amino-acid sequence, 541 residues long: Glucose-6-phosphate isomerase (541 aa).

Glu-346 acts as the Proton donor in catalysis. Residues His-377 and Lys-506 contribute to the active site.

The protein belongs to the GPI family.

It localises to the cytoplasm. It catalyses the reaction alpha-D-glucose 6-phosphate = beta-D-fructose 6-phosphate. The protein operates within carbohydrate biosynthesis; gluconeogenesis. It functions in the pathway carbohydrate degradation; glycolysis; D-glyceraldehyde 3-phosphate and glycerone phosphate from D-glucose: step 2/4. Its function is as follows. Catalyzes the reversible isomerization of glucose-6-phosphate to fructose-6-phosphate. The sequence is that of Glucose-6-phosphate isomerase from Sinorhizobium medicae (strain WSM419) (Ensifer medicae).